We begin with the raw amino-acid sequence, 104 residues long: Ig kappa chain V region XP-1 (104 aa).

Positions 1–24 are framework-1; sequence ADIVMTQTPASVSEPVGGTVTIKC. The complementarity-determining-1 stretch occupies residues 25–35; it reads QASQSIFBBLA. Positions 36 to 49 are framework-2; sequence WYQKPGZPPKGLLY. Residues 50–56 are complementarity-determining-2; it reads TBYTLAS. A framework-3 region spans residues 57–88; that stretch reads GVSSRFSGGGSGTBFTLTISDLECABAATYYC. The interval 89–100 is complementarity-determining-3; sequence EXTGVSZBXBKG. The tract at residues 101–104 is framework-4; it reads FGGG.

In Oryctolagus cuniculus (Rabbit), this protein is Ig kappa chain V region XP-1.